The following is a 44-amino-acid chain: uncharacterized protein (44 aa).

Residues 19–39 form a helical membrane-spanning segment; sequence AVGFVVSFGFFAFLFVMATVI.

It localises to the cell membrane. This is an uncharacterized protein from Bacillus subtilis (strain 168).